A 269-amino-acid chain; its full sequence is Tryptophan synthase alpha chain (269 aa).

Active-site proton acceptor residues include Glu49 and Asp60.

The protein belongs to the TrpA family. In terms of assembly, tetramer of two alpha and two beta chains.

It catalyses the reaction (1S,2R)-1-C-(indol-3-yl)glycerol 3-phosphate + L-serine = D-glyceraldehyde 3-phosphate + L-tryptophan + H2O. It functions in the pathway amino-acid biosynthesis; L-tryptophan biosynthesis; L-tryptophan from chorismate: step 5/5. Its function is as follows. The alpha subunit is responsible for the aldol cleavage of indoleglycerol phosphate to indole and glyceraldehyde 3-phosphate. This chain is Tryptophan synthase alpha chain, found in Paramagnetospirillum magneticum (strain ATCC 700264 / AMB-1) (Magnetospirillum magneticum).